Here is a 118-residue protein sequence, read N- to C-terminus: Large ribosomal subunit protein uL24 (118 aa).

Belongs to the universal ribosomal protein uL24 family. As to quaternary structure, part of the 50S ribosomal subunit.

Functionally, one of two assembly initiator proteins, it binds directly to the 5'-end of the 23S rRNA, where it nucleates assembly of the 50S subunit. Its function is as follows. One of the proteins that surrounds the polypeptide exit tunnel on the outside of the subunit. This is Large ribosomal subunit protein uL24 from Prochlorococcus marinus (strain MIT 9515).